A 131-amino-acid polypeptide reads, in one-letter code: Histone H2B.2 (131 aa).

Residues 1-20 are compositionally biased toward basic and acidic residues; that stretch reads MAPPKAEKKPASKAPAEKKP. The tract at residues 1-39 is disordered; the sequence is MAPPKAEKKPASKAPAEKKPAAKKTASSTDAKKRTKTRK. An N6-acetyllysine; alternate mark is found at K8 and K9. Residues K8 and K9 each participate in a glycyl lysine isopeptide (Lys-Gly) (interchain with G-Cter in SUMO); alternate cross-link. S12 bears the Phosphoserine mark. K13 bears the N6-acetyllysine mark. At K18 the chain carries N6-acetyllysine; alternate. K18 participates in a covalent cross-link: Glycyl lysine isopeptide (Lys-Gly) (interchain with G-Cter in SUMO); alternate. A Glycyl lysine isopeptide (Lys-Gly) (interchain with G-Cter in SUMO) cross-link involves residue K19. Residue K125 forms a Glycyl lysine isopeptide (Lys-Gly) (interchain with G-Cter in ubiquitin) linkage.

This sequence belongs to the histone H2B family. As to quaternary structure, the nucleosome is a histone octamer containing two molecules each of H2A, H2B, H3 and H4 assembled in one H3-H4 heterotetramer and two H2A-H2B heterodimers. The octamer wraps approximately 147 bp of DNA. In terms of processing, monoubiquitinated to form H2BK123ub1. H2BK123ub1 gives a specific tag for epigenetic transcriptional activation and is also prerequisite for H3K4me and H3K79me formation. H2BK123ub1 also modulates the formation of double-strand breaks during meiosis and is a prerequisite for DNA-damage checkpoint activation. Phosphorylated by STE20 to form H2BS10ph during progression through meiotic prophase. May be correlated with chromosome condensation. Post-translationally, acetylated by GCN5 to form H2BK11ac and H2BK16ac. H2BK16ac can also be formed by ESA1. Acetylation of N-terminal lysines and particularly formation of H2BK11acK16ac has a positive effect on transcription. In terms of processing, sumoylation to form H2BK6su or H2BK7su, and probably also H2BK16su or H2BK17su, occurs preferentially near the telomeres and represses gene transcription.

It localises to the nucleus. The protein localises to the chromosome. Functionally, core component of nucleosome. Nucleosomes wrap and compact DNA into chromatin, limiting DNA accessibility to the cellular machineries which require DNA as a template. Histones thereby play a central role in transcription regulation, DNA repair, DNA replication and chromosomal stability. DNA accessibility is regulated via a complex set of post-translational modifications of histones, also called histone code, and nucleosome remodeling. The polypeptide is Histone H2B.2 (HTB2) (Scheffersomyces stipitis (strain ATCC 58785 / CBS 6054 / NBRC 10063 / NRRL Y-11545) (Yeast)).